The primary structure comprises 1589 residues: Paternally-expressed gene 3 protein (1589 aa).

In terms of domain architecture, SCAN box spans 46–128; the sequence is HQRFRNLIYV…TLLENYKEMY (83 aa). 3 disordered regions span residues 128 to 230, 266 to 306, and 319 to 349; these read YQPE…ESYQ, DGHS…RRGI, and KFIKDVSRSSKSGRARESSDRSQRFPRMSDD. Residues 129–142 are compositionally biased toward acidic residues; that stretch reads QPEDDNNSDVTSDD. Composition is skewed to basic and acidic residues over residues 143-152, 161-182, 206-225, and 295-306; these read DMTRNRRESS, SGDRDWDRRGRSRDMEPRDRWS, FEMDRDDDRDSRAYESRSQD, and PEAKKSTHRRGI. 3 C2H2-type zinc fingers span residues 454–476, 507–529, and 565–587; these read YVCDECGRSFSVISEFVEHQIMH, FECKDCGETFNKSAALAEHRKIH, and YECRVCKETFLHSSALIEHQKIH. A compositionally biased stretch (basic and acidic residues) spans 588–607; that stretch reads FGDDKDNEREHERERERGET. Residues 588 to 610 form a disordered region; it reads FGDDKDNEREHERERERGETFRP. A C2H2-type 4 zinc finger spans residues 627-649; it reads YECKVCGETFLHSSSLKEHQKIH. The segment at 838 to 930 is disordered; it reads LVASKPPRSH…EFSVPSSNVR (93 aa). Residues 868-881 are compositionally biased toward basic and acidic residues; sequence LNDKRQKIPARENP. A C2H2-type 5 zinc finger spans residues 969–991; it reads YECQECGECFAHSSDLTEHQKIH. The interval 1056 to 1104 is disordered; the sequence is EKSHGEESQGENTDGEETHSEETHGQETIEDPVIQSSDMEDPQKDDPDD. Positions 1071–1082 are enriched in basic and acidic residues; it reads EETHSEETHGQE. C2H2-type zinc fingers lie at residues 1107-1129, 1163-1185, 1225-1247, 1282-1304, and 1332-1354; these read YECEDCGLGFVDLTDLTDHQKVH, YECPKCGESFIHSSFLFEHQRIH, IRCLLCGQGFIHSSALNEHMRLH, FECAVCGESFVNPAELADHVTVH, and YECKDCGKSFIHSTVLTKHKELH. Residues 1396 to 1416 are compositionally biased toward acidic residues; the sequence is AEPEVEAAEPEVEAAEPEVEA. Residues 1396 to 1496 form a disordered region; it reads AEPEVEAAEP…GIEDPEEGED (101 aa). 7 repeat units span residues 1398–1404, 1405–1411, 1412–1418, 1419–1423, 1426–1430, 1433–1437, and 1440–1444. A 3 X 7 AA repeat of P-E-V-E-A-A-E region spans residues 1398 to 1418; sequence PEVEAAEPEVEAAEPEVEAAE. The tract at residues 1419 to 1444 is 4 X 5 AA repeat of P-X-G-E-A; sequence PNGEAEGPDGEAAEPIGEAGQPNGEA. Composition is skewed to acidic residues over residues 1450-1467 and 1476-1496; these read DADEPDGAGIEDPEERAE and PEGDADEPDGVGIEDPEEGED. 2 C2H2-type zinc fingers span residues 1506 to 1528 and 1565 to 1587; these read YDCHECTETFTSSTAFGEHLKTH and FKCDVCGQLFNDRLSLARHQNTH.

Belongs to the krueppel C2H2-type zinc-finger protein family. As to quaternary structure, homodimer. Interacts with SIAH1A and SIAH2. Interacts with TRAF2.

It is found in the nucleus. The protein resides in the cytoplasm. Functionally, induces apoptosis in cooperation with SIAH1A. Acts as a mediator between p53/TP53 and BAX in a neuronal death pathway that is activated by DNA damage. Acts synergistically with TRAF2 and inhibits TNF induced apoptosis through activation of NF-kappa-B. This Gorilla gorilla gorilla (Western lowland gorilla) protein is Paternally-expressed gene 3 protein (PEG3).